The sequence spans 133 residues: UPF0292 protein TGAM_1777 (133 aa).

Residues 20-100 (EGALIVEGLR…RVDVETRREL (81 aa)) enclose the Toprim domain. Positions 26, 69, and 71 each coordinate Mg(2+).

The protein belongs to the UPF0292 family. Mg(2+) is required as a cofactor.

The polypeptide is UPF0292 protein TGAM_1777 (Thermococcus gammatolerans (strain DSM 15229 / JCM 11827 / EJ3)).